The primary structure comprises 361 residues: Tetraacyldisaccharide 4'-kinase (361 aa).

49-56 (TTGGTGKT) lines the ATP pocket.

The protein belongs to the LpxK family.

It carries out the reaction a lipid A disaccharide + ATP = a lipid IVA + ADP + H(+). It participates in glycolipid biosynthesis; lipid IV(A) biosynthesis; lipid IV(A) from (3R)-3-hydroxytetradecanoyl-[acyl-carrier-protein] and UDP-N-acetyl-alpha-D-glucosamine: step 6/6. In terms of biological role, transfers the gamma-phosphate of ATP to the 4'-position of a tetraacyldisaccharide 1-phosphate intermediate (termed DS-1-P) to form tetraacyldisaccharide 1,4'-bis-phosphate (lipid IVA). The sequence is that of Tetraacyldisaccharide 4'-kinase from Chlorobaculum parvum (strain DSM 263 / NCIMB 8327) (Chlorobium vibrioforme subsp. thiosulfatophilum).